The sequence spans 158 residues: uncharacterized protein (158 aa).

One can recognise a Nudix hydrolase domain in the interval 3 to 130 (YLQRVTNCVL…DGHILDFMMK (128 aa)). The Nudix box motif lies at 34–55 (GKMESGESVRDSVIREYREETG). Residues Glu49 and Glu53 each coordinate Mg(2+).

Belongs to the Nudix hydrolase family. The cofactor is Mg(2+).

This is an uncharacterized protein from Bacillus subtilis (strain 168).